Consider the following 87-residue polypeptide: Small ribosomal subunit protein uS15 (87 aa).

Belongs to the universal ribosomal protein uS15 family. In terms of assembly, part of the 30S ribosomal subunit. Forms a bridge to the 50S subunit in the 70S ribosome, contacting the 23S rRNA.

Its function is as follows. One of the primary rRNA binding proteins, it binds directly to 16S rRNA where it helps nucleate assembly of the platform of the 30S subunit by binding and bridging several RNA helices of the 16S rRNA. Forms an intersubunit bridge (bridge B4) with the 23S rRNA of the 50S subunit in the ribosome. The polypeptide is Small ribosomal subunit protein uS15 (Dehalococcoides mccartyi (strain ATCC BAA-2266 / KCTC 15142 / 195) (Dehalococcoides ethenogenes (strain 195))).